The primary structure comprises 159 residues: Transcriptional repressor NrdR (159 aa).

The segment at 3 to 34 is a zinc-finger region; sequence CPFCGGVENKVMDSRVSRDGNAIRRRRECLAC. The region spanning 49-139 is the ATP-cone domain; that stretch reads PTVVKKDGRR…VYRQFRDVND (91 aa).

It belongs to the NrdR family. Zn(2+) is required as a cofactor.

Negatively regulates transcription of bacterial ribonucleotide reductase nrd genes and operons by binding to NrdR-boxes. The protein is Transcriptional repressor NrdR of Syntrophus aciditrophicus (strain SB).